Here is a 154-residue protein sequence, read N- to C-terminus: 6,7-dimethyl-8-ribityllumazine synthase (154 aa).

Residues Phe-21, 55-57 (AFE), and 79-81 (CVI) each bind 5-amino-6-(D-ribitylamino)uracil. 84–85 (AT) contacts (2S)-2-hydroxy-3-oxobutyl phosphate. His-87 (proton donor) is an active-site residue. 5-amino-6-(D-ribitylamino)uracil is bound at residue Phe-112. (2S)-2-hydroxy-3-oxobutyl phosphate is bound at residue Arg-126.

It belongs to the DMRL synthase family. Forms an icosahedral capsid composed of 60 subunits, arranged as a dodecamer of pentamers.

The catalysed reaction is (2S)-2-hydroxy-3-oxobutyl phosphate + 5-amino-6-(D-ribitylamino)uracil = 6,7-dimethyl-8-(1-D-ribityl)lumazine + phosphate + 2 H2O + H(+). It participates in cofactor biosynthesis; riboflavin biosynthesis; riboflavin from 2-hydroxy-3-oxobutyl phosphate and 5-amino-6-(D-ribitylamino)uracil: step 1/2. In terms of biological role, catalyzes the formation of 6,7-dimethyl-8-ribityllumazine by condensation of 5-amino-6-(D-ribitylamino)uracil with 3,4-dihydroxy-2-butanone 4-phosphate. This is the penultimate step in the biosynthesis of riboflavin. In Staphylococcus aureus (strain MRSA252), this protein is 6,7-dimethyl-8-ribityllumazine synthase.